We begin with the raw amino-acid sequence, 1174 residues long: Male determiner protein Mdmd(III) (1174 aa).

Over residues 1–15 (MNATDAESRKPENKP) the composition is skewed to basic and acidic residues. Disordered regions lie at residues 1–51 (MNAT…SGQR), 80–109 (KDGSNEMLPKEDSINTNHNYTTDSNEHPVE), and 136–259 (KQLS…LRRS). Residues 16–35 (SSESSSSGSTSGSSDGEVSS) are compositionally biased toward low complexity. Positions 36–47 (KTYFKNNKSKVL) are enriched in polar residues. The span at 80–92 (KDGSNEMLPKEDS) shows a compositional bias: basic and acidic residues. Residues 93–102 (INTNHNYTTD) show a composition bias toward polar residues. The segment covering 138 to 153 (LSAYRSRSRSTRLSYS) has biased composition (low complexity). Residues 167–180 (SRYKKSVLRNRRTS) are compositionally biased toward basic residues. The span at 183-200 (HGRDSSTTKRSVSRDKDN) shows a compositional bias: basic and acidic residues. The segment covering 201–223 (RLRRRIGSSRSHTRSHSRFRRSE) has biased composition (basic residues). Positions 235–259 (RSQERRHERRRSMSSDYERIALRRS) are enriched in basic and acidic residues. Positions 348–531 (KKYIHGYINK…KVLFQVRRDG (184 aa)) constitute an MIF4G domain. Residues 641-757 (ALRRTIYLTL…SWDVLDCIKL (117 aa)) form the MI domain. The span at 840–857 (SAPSSSSSSSLSSELSAP) shows a compositional bias: low complexity. 2 disordered regions span residues 840-1045 (SAPS…SRTK) and 1096-1133 (KDNYGNRQNHEISQRHDSEIKRRREERKKRHHEKNHSR). Residues 869-909 (KKKHKGKNKKMTKKKNPSKKKEKTKKFVGKNKIAAKNKTIK) show a composition bias toward basic residues. A compositionally biased stretch (basic and acidic residues) spans 910–924 (RRTDKDNSSSKDNFL). Low complexity predominate over residues 926–957 (SESSSNESISLDSLSSELFAPSSYSSSESSND). The segment covering 963-1001 (KHKGKNKKMTKKKNPSNKKEKTKKKLSKNKKAPNKNTKK) has biased composition (basic residues). The segment covering 1010-1020 (SSESSISESKS) has biased composition (low complexity). Residues 1034–1045 (RKKRVTSKSRTK) show a composition bias toward basic residues. A compositionally biased stretch (basic and acidic residues) spans 1103–1118 (QNHEISQRHDSEIKRR). A compositionally biased stretch (basic residues) spans 1119 to 1130 (REERKKRHHEKN).

This sequence belongs to the CWC22 family. In terms of assembly, component of the spliceosome C complex.

The protein resides in the nucleus speckle. Male determiner protein (M-factor) that controls male somatic sexual differentiation. Acts as a dominant factor that regulates the mRNA splicing of transformer (tra) and doublesex (dsx) transcripts and promotes expression of male splice forms of tra and dsx. Probably acts as a component of the spliceosome C complex required for mRNA splicing factor and exon-junction complex (EJC) assembly. Hinders eIF4AIII from non-specifically binding RNA and escorts it to the splicing machinery to promote EJC assembly on mature mRNAs. The sequence is that of Male determiner protein Mdmd(III) from Musca domestica (House fly).